The primary structure comprises 902 residues: Histone-lysine N-methyltransferase CLF (902 aa).

Positions 1-14 (MASEASPSSSATRS) are enriched in low complexity. 3 disordered regions span residues 1-33 (MASE…KEVS), 73-107 (SMER…SNNN), and 335-522 (GKTG…FMGE). Basic and acidic residues-rich tracts occupy residues 15 to 33 (EPPK…KEVS) and 78 to 95 (GSCK…RDSP). Residues 337 to 357 (TGTSSDGAGTKTTPTKFSSKL) are compositionally biased toward polar residues. Low complexity predominate over residues 394–403 (DKVSSSPKVK). A compositionally biased stretch (basic residues) spans 404–416 (GSGRRVGRKRNKN). The span at 438 to 449 (SDSIASGSCSPS) shows a compositional bias: low complexity. Residues 459-473 (ATSSSQKHVKSGNSG) show a composition bias toward polar residues. Positions 531-581 (TNKLWRPLEKSLFDKGVEIFGMNSCLIARNLLSGFKSCWEVFQYMTCSENK) constitute an SANT domain. The region spanning 638–737 (RKRITEKKDQ…SLGVPSQRGD (100 aa)) is the CXC domain. The 116-residue stretch at 752–867 (QRVLLGISDV…AGEELFYDYR (116 aa)) folds into the SET domain. Residue Tyr866 coordinates S-adenosyl-L-methionine. Positions 875–890 (AWAKKPEAPGSKKDEN) are enriched in basic and acidic residues. Positions 875–902 (AWAKKPEAPGSKKDENVTPSVGRPKKLA) are disordered.

It belongs to the class V-like SAM-binding methyltransferase superfamily. Histone-lysine methyltransferase family. EZ subfamily. Probable component of a PcG complex. In plants, PcG complexes are probably composed of a member of the EZ family (CLF or MEA), FIE, and a member of the VEFS family (FIS2, VRN2 or EMF2). Interacts with FIE. Interacts with RING1A. Binds to ALP1. Interacts with BLI. Binds to ATX1 in the nucleus. Interacts with EOL1. Interacts (via SANT domain) with HXK1 in the nucleus. Strongly expressed throughout the apical meristem, leaf primordia, and leaves of 7-8 day-old seedling. Weakly expressed in the vasculature of hypocotyl. Strongly expressed throughout the young stages 1 and 2 floral meristems that arose on the flanks of the apex. In stage 3 and 4 flowers, it is expressed in the emerging sepal primordia and in the dome of the floral meristem. During stages 6 and 7, it is strongly expressed in developing petal and stamen, and weakly expressed in the sepals. Late in floral development, at stage 12, it is weakly expressed in all floral whorls, and expressed at intermediate level in petals and ovules.

The protein resides in the nucleus. It carries out the reaction L-lysyl-[histone] + S-adenosyl-L-methionine = N(6)-methyl-L-lysyl-[histone] + S-adenosyl-L-homocysteine + H(+). Functionally, polycomb group (PcG) protein. Catalytic subunit of some PcG multiprotein complex, which methylates 'Lys-27' of histone H3, leading to transcriptional repression of the affected target genes, mainly abscisic acid (ABA) responsive elements. Required to regulate floral development by repressing the AGAMOUS homeotic gene in leaves, inflorescence stems and flowers. Together with ATX1, modulates AG nucleosome methylation statement. Regulates the antero-posterior organization of the endosperm, as well as the division and elongation rates of leaf cells. PcG proteins act by forming multiprotein complexes, which are required to maintain the transcriptionally repressive state of homeotic genes throughout development. PcG proteins are not required to initiate repression, but to maintain it during later stages of development. Forms a nuclear complex with EZA1/SWN and HXK1 to target common glucose-responsive genes and regulate glucose signaling by glucose-mediated gene repression. Affects the recruitment of HXK1 to the target chromatin. The sequence is that of Histone-lysine N-methyltransferase CLF from Arabidopsis thaliana (Mouse-ear cress).